The following is a 446-amino-acid chain: Citrate/sodium symporter (446 aa).

5 helical membrane passes run 23 to 43 (IFGMPLPLYAFALITLLLSHF), 46 to 66 (AIPTDLVGGFALMFVMGAIFG), 79 to 99 (IGGAPVMIFLVAAYFVYAGIF), 110 to 130 (VMDKSNFLNLFIAVLITGAIL), and 148 to 168 (ILAGIVGASLFGIVIGLCFGI). Ile-181 and Gly-183 together coordinate Na(+). Residues Asn-186 and Gly-187 each coordinate citrate. The next 5 membrane-spanning stretches (helical) occupy residues 213-233 (IAILTIANIFAIIFAALLDMI), 267-287 (ETAVGMVLSTTCFLLAYVVAK), 289-309 (ILPSIGGVSIHYFAWMVLIVA), 335-355 (QLLWVLMVGVGVCYTDLQEII), and 364-384 (VIAAIIVVGAVVGAAIGGWLI). Na(+)-binding residues include Met-399 and Asn-401. Positions 402, 404, 405, and 428 each coordinate citrate. The chain crosses the membrane as a helical span at residues 425 to 445 (ISSRLGGGIVLVIASIVFSMM).

This sequence belongs to the 2-hydroxycarboxylate transporter (2-HCT) (TC 2.A.24) family. In terms of assembly, homodimer.

The protein localises to the cell inner membrane. It carries out the reaction citrate(out) + 2 Na(+)(out) = citrate(in) + 2 Na(+)(in). Functionally, secondary active transporter that catalyzes the uptake of citrate across the membrane with the concomitant uptake of sodium. Is specific for citrate. This chain is Citrate/sodium symporter, found in Salmonella dublin.